Reading from the N-terminus, the 260-residue chain is UPF0758 protein Smed_1459 (260 aa).

In terms of domain architecture, MPN spans valine 138–phenylalanine 260. Residues histidine 209, histidine 211, and aspartate 222 each coordinate Zn(2+). The short motif at histidine 209–aspartate 222 is the JAMM motif element.

Belongs to the UPF0758 family.

This is UPF0758 protein Smed_1459 from Sinorhizobium medicae (strain WSM419) (Ensifer medicae).